An 881-amino-acid chain; its full sequence is Valine--tRNA ligase (881 aa).

A 'HIGH' region motif is present at residues 49–59 (PNVTGKLHLGH). A 'KMSKS' region motif is present at residues 526 to 530 (KMSKS). An ATP-binding site is contributed by K529. Positions 810 to 881 (LADLINLDEE…VRQRLADLEK (72 aa)) form a coiled coil.

The protein belongs to the class-I aminoacyl-tRNA synthetase family. ValS type 1 subfamily. In terms of assembly, monomer.

It localises to the cytoplasm. It carries out the reaction tRNA(Val) + L-valine + ATP = L-valyl-tRNA(Val) + AMP + diphosphate. Catalyzes the attachment of valine to tRNA(Val). As ValRS can inadvertently accommodate and process structurally similar amino acids such as threonine, to avoid such errors, it has a 'posttransfer' editing activity that hydrolyzes mischarged Thr-tRNA(Val) in a tRNA-dependent manner. In Bacillus cereus (strain ATCC 10987 / NRS 248), this protein is Valine--tRNA ligase.